A 381-amino-acid chain; its full sequence is O-phospho-L-seryl-tRNA:Cys-tRNA synthase (381 aa).

Pyridoxal 5'-phosphate is bound by residues 86–87 (AR), asparagine 192, and 215–217 (SGH). N6-(pyridoxal phosphate)lysine is present on lysine 218.

This sequence belongs to the SepCysS family. In terms of assembly, homodimer. Interacts with SepRS. Requires pyridoxal 5'-phosphate as cofactor.

The catalysed reaction is O-phospho-L-seryl-tRNA(Cys) + hydrogen sulfide + H(+) = L-cysteinyl-tRNA(Cys) + phosphate. Functionally, converts O-phospho-L-seryl-tRNA(Cys) (Sep-tRNA(Cys)) to L-cysteinyl-tRNA(Cys) (Cys-tRNA(Cys)). The polypeptide is O-phospho-L-seryl-tRNA:Cys-tRNA synthase (Methanococcus vannielii (strain ATCC 35089 / DSM 1224 / JCM 13029 / OCM 148 / SB)).